Reading from the N-terminus, the 175-residue chain is D-glycero-beta-D-manno-heptose-1,7-bisphosphate 7-phosphatase (175 aa).

Asp7 (nucleophile) is an active-site residue. Residues Asp7 and Asp9 each contribute to the Mg(2+) site. Substrate contacts are provided by residues 7–9 (DRD), 15–19 (DSDAY), and 50–53 (TNQS). Asp9 (proton donor) is an active-site residue. Residues Cys89, His91, Cys97, and Cys99 each coordinate Zn(2+). Substrate is bound at residue 100–101 (RK). Residue Asp126 participates in Mg(2+) binding.

This sequence belongs to the gmhB family. As to quaternary structure, monomer. The cofactor is Mg(2+). Zn(2+) serves as cofactor.

The protein localises to the cytoplasm. It carries out the reaction D-glycero-beta-D-manno-heptose 1,7-bisphosphate + H2O = D-glycero-beta-D-manno-heptose 1-phosphate + phosphate. Its pathway is nucleotide-sugar biosynthesis; ADP-L-glycero-beta-D-manno-heptose biosynthesis; ADP-L-glycero-beta-D-manno-heptose from D-glycero-beta-D-manno-heptose 7-phosphate: step 2/4. It participates in bacterial outer membrane biogenesis; LPS core biosynthesis. Functionally, converts the D-glycero-beta-D-manno-heptose 1,7-bisphosphate (beta-HBP) intermediate into D-glycero-beta-D-manno-heptose 1-phosphate by removing the phosphate group at the C-7 position. The chain is D-glycero-beta-D-manno-heptose-1,7-bisphosphate 7-phosphatase from Pseudomonas putida (strain ATCC 47054 / DSM 6125 / CFBP 8728 / NCIMB 11950 / KT2440).